Consider the following 276-residue polypeptide: Large ribosomal subunit protein uL2 (276 aa).

The disordered stretch occupies residues 221 to 276 (RGSVMNPNDHPHGGGEGRAPIGRKAPVTPWGKPTLGLKTRKKKNKSDQYIIRRRKK).

It belongs to the universal ribosomal protein uL2 family. In terms of assembly, part of the 50S ribosomal subunit. Forms a bridge to the 30S subunit in the 70S ribosome.

Its function is as follows. One of the primary rRNA binding proteins. Required for association of the 30S and 50S subunits to form the 70S ribosome, for tRNA binding and peptide bond formation. It has been suggested to have peptidyltransferase activity; this is somewhat controversial. Makes several contacts with the 16S rRNA in the 70S ribosome. The chain is Large ribosomal subunit protein uL2 from Brevibacillus brevis (strain 47 / JCM 6285 / NBRC 100599).